The chain runs to 384 residues: WD repeat-containing protein 74 (384 aa).

6 WD repeats span residues 40 to 80 (RREE…FLSQ), 83 to 122 (CPGG…ASSD), 128 to 168 (KVGP…EPVF), 179 to 220 (DLRV…RRPV), 224 to 266 (TYGE…GCLK), and 267 to 306 (GLAG…GLEH). At Ser214 the chain carries Phosphoserine. The residue at position 311 (Lys311) is an N6-methyllysine. Residues 320-384 (SGRDNWEDEP…KKKRPGSTSP (65 aa)) form a required for nucleolar and nuclear location region. Positions 323 to 384 (DNWEDEPQEP…KKKRPGSTSP (62 aa)) are disordered. Basic residues predominate over residues 371 to 384 (QRRKKKKRPGSTSP).

In terms of assembly, isoform 1 interacts (through WDR repeats) with NVL; the interaction is independent of RNA or pre-60S ribosome particles. Isoform 2 does not interact with NVL. Interacts with MTREX; the interaction dissociation in a late stage of rRNA synthesis is required for appropriate maturation of pre-60S particles and depends on the ATPase activity of NVL.

Its subcellular location is the nucleus. It localises to the nucleolus. Its function is as follows. Regulatory protein of the MTREX-exosome complex involved in the synthesis of the 60S ribosomal subunit. Participates in an early cleavage of the pre-rRNA processing pathway in cooperation with NVL. Required for blastocyst formation, is necessary for RNA transcription, processing and/or stability during preimplantation development. This chain is WD repeat-containing protein 74 (Wdr74), found in Mus musculus (Mouse).